A 148-amino-acid chain; its full sequence is Cytochrome c-type biogenesis protein CcmE (148 aa).

Residues 1–7 (MKPRSKR) are Cytoplasmic-facing. The helical; Signal-anchor for type II membrane protein transmembrane segment at 8-28 (LLLVAGAVALLVGAVALVLNA) threads the bilayer. The Periplasmic segment spans residues 29–148 (FQQNLVFFHT…AQKAAQTVQQ (120 aa)). Heme is bound by residues His123 and Tyr127.

It belongs to the CcmE/CycJ family.

The protein localises to the cell inner membrane. Its function is as follows. Heme chaperone required for the biogenesis of c-type cytochromes. Transiently binds heme delivered by CcmC and transfers the heme to apo-cytochromes in a process facilitated by CcmF and CcmH. The polypeptide is Cytochrome c-type biogenesis protein CcmE (Aromatoleum aromaticum (strain DSM 19018 / LMG 30748 / EbN1) (Azoarcus sp. (strain EbN1))).